A 260-amino-acid chain; its full sequence is Taurine import ATP-binding protein TauB (260 aa).

One can recognise an ABC transporter domain in the interval 6–235 (AHQVSVVYAS…RYAAGESMRS (230 aa)). ATP is bound at residue 40–47 (GASGCGKS).

Belongs to the ABC transporter superfamily. Taurine importer (TC 3.A.1.17.1) family. As to quaternary structure, the complex is composed of two ATP-binding proteins (TauB), two transmembrane proteins (TauC) and a solute-binding protein (TauA).

It is found in the cell inner membrane. The catalysed reaction is taurine(out) + ATP + H2O = taurine(in) + ADP + phosphate + H(+). Part of the ABC transporter complex TauABC involved in taurine import. Responsible for energy coupling to the transport system. This Burkholderia thailandensis (strain ATCC 700388 / DSM 13276 / CCUG 48851 / CIP 106301 / E264) protein is Taurine import ATP-binding protein TauB.